The chain runs to 521 residues: Lysine--tRNA ligase (521 aa).

The 'HIGH' region motif lies at P32–N40. The 'KMSKS' region motif lies at K280–S284.

Belongs to the class-I aminoacyl-tRNA synthetase family.

It localises to the cytoplasm. The enzyme catalyses tRNA(Lys) + L-lysine + ATP = L-lysyl-tRNA(Lys) + AMP + diphosphate. In Borreliella burgdorferi (strain ATCC 35210 / DSM 4680 / CIP 102532 / B31) (Borrelia burgdorferi), this protein is Lysine--tRNA ligase (lysS).